A 693-amino-acid chain; its full sequence is Cleavage and polyadenylation specificity factor subunit 3-I (693 aa).

The HXHXDH motif motif lies at 81 to 86; sequence HFHIDH.

This sequence belongs to the metallo-beta-lactamase superfamily. RNA-metabolizing metallo-beta-lactamase-like family. INTS11 subfamily. As to quaternary structure, component of the CPSF complex, at least composed of CPSF160, CPSF100, CPSF73-I, CPSF73-II, CPSF30, FY and FIPS5. Interacts with CLPS3, CPSF100, CPSF160 and FY. In terms of tissue distribution, highly expressed in carpels. Also detected in seedlings, roots, stems, leaves, flowers and siliques.

The protein resides in the nucleus. Component of the cleavage and polyadenylation specificity factor (CPSF) complex that play a key role in pre-mRNA 3'-end formation, recognizing the AAUAAA signal sequence and interacting with poly(A) polymerase and other factors to bring about cleavage and poly(A) addition. May function as mRNA 3'-end-processing endonuclease and also be involved in the histone 3'-end pre-mRNA processing. The chain is Cleavage and polyadenylation specificity factor subunit 3-I (CPSF73-I) from Arabidopsis thaliana (Mouse-ear cress).